Reading from the N-terminus, the 419-residue chain is Putative zinc metalloprotease M6_Spy1682 (419 aa).

His18 contributes to the Zn(2+) binding site. Glu19 is an active-site residue. Residue His22 coordinates Zn(2+). Helical transmembrane passes span 169-191 (LITN…ILLV), 301-323 (LAWS…FSLN), 343-365 (LESV…LIPI), and 392-411 (AYIT…AVTW). Residues 175-274 (GPMNNFILGI…LKTVAVKPQK (100 aa)) form the PDZ domain.

This sequence belongs to the peptidase M50B family. Requires Zn(2+) as cofactor.

The protein resides in the cell membrane. The sequence is that of Putative zinc metalloprotease M6_Spy1682 from Streptococcus pyogenes serotype M6 (strain ATCC BAA-946 / MGAS10394).